Here is a 196-residue protein sequence, read N- to C-terminus: ATP-dependent Clp protease proteolytic subunit (196 aa).

The active-site Nucleophile is the S101. H126 is an active-site residue.

Belongs to the peptidase S14 family. As to quaternary structure, component of the chloroplastic Clp protease core complex.

The protein localises to the plastid. The protein resides in the chloroplast stroma. It carries out the reaction Hydrolysis of proteins to small peptides in the presence of ATP and magnesium. alpha-casein is the usual test substrate. In the absence of ATP, only oligopeptides shorter than five residues are hydrolyzed (such as succinyl-Leu-Tyr-|-NHMec, and Leu-Tyr-Leu-|-Tyr-Trp, in which cleavage of the -Tyr-|-Leu- and -Tyr-|-Trp bonds also occurs).. Its function is as follows. Cleaves peptides in various proteins in a process that requires ATP hydrolysis. Has a chymotrypsin-like activity. Plays a major role in the degradation of misfolded proteins. This Atropa belladonna (Belladonna) protein is ATP-dependent Clp protease proteolytic subunit.